The following is a 256-amino-acid chain: Imidazole glycerol phosphate synthase subunit HisF (256 aa).

Residues D12 and D131 contribute to the active site.

This sequence belongs to the HisA/HisF family. As to quaternary structure, heterodimer of HisH and HisF.

Its subcellular location is the cytoplasm. It carries out the reaction 5-[(5-phospho-1-deoxy-D-ribulos-1-ylimino)methylamino]-1-(5-phospho-beta-D-ribosyl)imidazole-4-carboxamide + L-glutamine = D-erythro-1-(imidazol-4-yl)glycerol 3-phosphate + 5-amino-1-(5-phospho-beta-D-ribosyl)imidazole-4-carboxamide + L-glutamate + H(+). Its pathway is amino-acid biosynthesis; L-histidine biosynthesis; L-histidine from 5-phospho-alpha-D-ribose 1-diphosphate: step 5/9. Functionally, IGPS catalyzes the conversion of PRFAR and glutamine to IGP, AICAR and glutamate. The HisF subunit catalyzes the cyclization activity that produces IGP and AICAR from PRFAR using the ammonia provided by the HisH subunit. This chain is Imidazole glycerol phosphate synthase subunit HisF, found in Pseudomonas paraeruginosa (strain DSM 24068 / PA7) (Pseudomonas aeruginosa (strain PA7)).